The following is a 303-amino-acid chain: Probable phytol kinase, chloroplastic (303 aa).

The N-terminal 49 residues, 1 to 49, are a transit peptide targeting the chloroplast; the sequence is MAAAAAWTGAASPNSLLLSRSPPHAAALAPSPGSSMRRRLLLGVGTPAV. 6 helical membrane-spanning segments follow: residues 98-118, 122-144, 168-188, 227-247, 254-274, and 276-296; these read VVHV…SNST, YFAA…RLYT, YVLV…IGIV, FISG…LGYI, ALGK…VPVT, and VVDD…LLFS.

Belongs to the polyprenol kinase family.

The protein resides in the plastid. The protein localises to the chloroplast membrane. The catalysed reaction is phytol + CTP = phytyl phosphate + CDP + H(+). It functions in the pathway cofactor biosynthesis; tocopherol biosynthesis. Functionally, involved in the activation and reutilization of phytol from chlorophyll degradation in plant metabolism, including tocopherol biosynthesis. Catalyzes the conversion of phytol to phytol monophosphate (PMP). In Zea mays (Maize), this protein is Probable phytol kinase, chloroplastic.